The sequence spans 577 residues: Arginine--tRNA ligase (577 aa).

Positions 122–132 (PNVAKEMHVGH) match the 'HIGH' region motif.

It belongs to the class-I aminoacyl-tRNA synthetase family. Monomer.

It localises to the cytoplasm. It carries out the reaction tRNA(Arg) + L-arginine + ATP = L-arginyl-tRNA(Arg) + AMP + diphosphate. The sequence is that of Arginine--tRNA ligase from Shigella dysenteriae serotype 1 (strain Sd197).